The sequence spans 303 residues: Glycine--tRNA ligase alpha subunit (303 aa).

The protein belongs to the class-II aminoacyl-tRNA synthetase family. As to quaternary structure, tetramer of two alpha and two beta subunits.

It localises to the cytoplasm. The enzyme catalyses tRNA(Gly) + glycine + ATP = glycyl-tRNA(Gly) + AMP + diphosphate. This chain is Glycine--tRNA ligase alpha subunit (glyQ), found in Helicobacter pylori (strain ATCC 700392 / 26695) (Campylobacter pylori).